Here is a 3412-residue protein sequence, read N- to C-terminus: Genome polyprotein (3412 aa).

Residues 1–104 (MSGRKAQGKT…LSSRKRRSSE (104 aa)) lie on the Cytoplasmic side of the membrane. Residues 38-72 (PGPSRGVQGFIFFFLFNILTGKKLTTHLKRLWRML) form a hydrophobic; homodimerization of capsid protein C region. Positions 102 to 121 (SSEMTMMPLLILSMVILGGG) are cleaved as a propeptide — ER anchor for the capsid protein C, removed in mature form by serine protease NS3. Residues 105 to 125 (MTMMPLLILSMVILGGGVTLV) form a helical membrane-spanning segment. At 126–244 (RKNRWLLLNV…GERQLQKIER (119 aa)) the chain is on the extracellular side. N-linked (GlcNAc...) asparagine; by host glycans are attached at residues Asn134 and Asn150. A helical membrane pass occupies residues 245-265 (WLVRNPFFAVTALAIAYLVGN). The Cytoplasmic segment spans residues 266 to 270 (NKTQR). The chain crosses the membrane as a helical span at residues 271 to 285 (VVIALLVLAVGPAYS). At 286-730 (AHCIGITDRD…TVFGSAFQGL (445 aa)) the chain is on the extracellular side. Intrachain disulfides connect Cys288–Cys315, Cys345–Cys401, Cys345–Cys406, Cys359–Cys390, Cys377–Cys401, Cys377–Cys406, Cys467–Cys568, and Cys585–Cys615. The tract at residues 383 to 396 (DRGWGNGCGLFGKG) is fusion peptide. Residues 731–751 (FGGLSWITKVIMGAVLIWVGI) form a helical membrane-spanning segment. At 752–757 (NTRNMT) the chain is on the extracellular side. A helical membrane pass occupies residues 758–778 (MSMSMILVGVIMMFLSLGVGA). Over 779-1132 (DQGCAVNFGK…LVRSWVTAGE (354 aa)) the chain is Extracellular. Disulfide bonds link Cys782/Cys793, Cys833/Cys921, Cys957/Cys1002, Cys1058/Cys1107, Cys1069/Cys1091, and Cys1090/Cys1094. Asn908 and Asn986 each carry an N-linked (GlcNAc...) asparagine; by host glycan. The chain crosses the membrane as a helical span at residues 1133–1153 (VHAVPFGLVSMMIAMEVVLRK). The Cytoplasmic portion of the chain corresponds to 1154-1201 (RQGPKQMLVGGIILLGAMLVGQVTMLDLVKLIVAVGLHFHEINNGGDA). The chain crosses the membrane as a helical span at residues 1202-1222 (MYMALIASFSIRPGLLIGFGL). The Lumenal segment spans residues 1223–1287 (RTLWSPRERL…ILPLMALLTP (65 aa)). A helical membrane pass occupies residues 1288–1308 (VTMYEVRMATMLFCTVVIVGV). Residues 1309 to 1355 (LHQNSKDTSMQKTIPIVALTLTSYMGLTQPFLGLCAYMSTQVFGRRS) are Cytoplasmic-facing. Residues 1356–1376 (IPVNEALAAAGLVGVLAGLAF) form a helical membrane-spanning segment. Topologically, residues 1377-1378 (QD) are lumenal. The chain crosses the membrane as a helical span at residues 1379–1399 (MENFLGPIAVGGILMMLVSVA). Residues 1400-1456 (GKVDGLELKKLGEVSWEEEAEISGSSSRYDVALSEQGEFKLLSEDKVPWDQIVMTSL) lie on the Cytoplasmic side of the membrane. The segment at 1407–1446 (LKKLGEVSWEEEAEISGSSSRYDVALSEQGEFKLLSEDKV) is interacts with and activates NS3 protease. The segment at residues 1457–1477 (ALVGAAIHPFALLLVLGGWVL) is an intramembrane region (helical). Residues 1478 to 2157 (HIKGARRSGD…RNALSMMPEA (680 aa)) lie on the Cytoplasmic side of the membrane. Residues 1485 to 1665 (SGDVLWDIPT…EVKEESKEEL (181 aa)) form the Peptidase S7 domain. Residues His1537, Asp1561, and Ser1622 each act as charge relay system; for serine protease NS3 activity in the active site. Residues 1669–1825 (PTMLKKGMTT…HSNGEIEDVQ (157 aa)) enclose the Helicase ATP-binding domain. Residues 1673-1676 (KKGM) are important for RNA-binding. 1682–1689 (FHPGAGKT) is an ATP binding site. The DEAH box signature appears at 1773 to 1776 (DEAH). The region spanning 1820–1997 (EIEDVQTDIP…VRGGMVAPLY (178 aa)) is the Helicase C-terminal domain. The residue at position 1877 (Lys1877) is an N6-acetyllysine; by host. Residues 1942 to 1961 (AAQRRGRIGRNPNRDGDSYY) are disordered. The chain crosses the membrane as a helical span at residues 2158–2178 (MTIVMLFILAGLLTSGMVIFF). At 2179 to 2186 (MSPKGMSR) the chain is on the lumenal side. Positions 2187–2207 (MSMAMGTMAGSGYLMFLGGVK) form an intramembrane region, helical. At 2208-2209 (PT) the chain is on the lumenal side. The helical transmembrane segment at 2210 to 2230 (HISYVMLIFFVLMVVIIPEPG) threads the bilayer. The Cytoplasmic segment spans residues 2231–2241 (QQRSIQDNQVA). Residues 2242–2262 (YLIIGILTLLSVVAANELGML) traverse the membrane as a helical segment. Topologically, residues 2263–2293 (EKTKEDFFGKRNIATSGGTIPWSWPDLDLKP) are lumenal. The segment at residues 2294-2314 (GAAWTVYVGIVTMLSPMLHHW) is an intramembrane region (helical). The Lumenal portion of the chain corresponds to 2315 to 2360 (IKVEYGNLSLSGIAQSASVLSFMDKGVPFMKMNISVVILLVSGWNS). A helical transmembrane segment spans residues 2361 to 2380 (ITVIPLLCGVGGAMLHWTLI). Over 2381–2421 (LPGIKAQQSKLAQKRVFHGVAKNPVVDGNPTADIEEAPEMP) the chain is Cytoplasmic. Residues 2422-2442 (ALYEKKLALYLLLALSLMSVA) traverse the membrane as a helical segment. At 2443 to 2445 (MCR) the chain is on the lumenal side. A helical transmembrane segment spans residues 2446 to 2466 (TPFSLAEGIVLSSAALGPLIE). The Cytoplasmic segment spans residues 2467–3411 (GNTSLLWNGP…VDADLQPGEL (945 aa)). The mRNA cap 0-1 NS5-type MT domain maps to 2508-2772 (GSANGKTLGE…DVILPIGTRS (265 aa)). S-adenosyl-L-methionine is bound at residue Ser2563. Ser2563 carries the phosphoserine modification. Lys2568 (for 2'-O-MTase activity) is an active-site residue. Positions 2593, 2594, 2611, 2612, 2638, and 2639 each coordinate S-adenosyl-L-methionine. Catalysis depends on Asp2653, which acts as the For 2'-O-MTase activity. Ile2654 serves as a coordination point for S-adenosyl-L-methionine. Residues Lys2689 and Glu2725 each act as for 2'-O-MTase activity in the active site. S-adenosyl-L-methionine is bound at residue Tyr2727. A Nuclear localization signal motif is present at residues 2879–2912 (RKIMRVVNRWLFRHLAREKKPRLCTKEEFIAKVR). Glu2946, His2950, Cys2955, and Cys2958 together coordinate Zn(2+). In terms of domain architecture, RdRp catalytic spans 3036-3188 (GGFYADDTAG…KPVDDRFGLA (153 aa)). The Zn(2+) site is built by His3223, Cys3239, and Cys3358.

It in the N-terminal section; belongs to the class I-like SAM-binding methyltransferase superfamily. mRNA cap 0-1 NS5-type methyltransferase family. In terms of assembly, homodimer. Interacts (via N-terminus) with host EXOC1 (via C-terminus); this interaction results in EXOC1 degradation through the proteasome degradation pathway. Forms heterodimers with envelope protein E in the endoplasmic reticulum and Golgi. As to quaternary structure, homodimer; in the endoplasmic reticulum and Golgi. Interacts with protein prM. Interacts with non-structural protein 1. In terms of assembly, homodimer; Homohexamer when secreted. Interacts with envelope protein E. Interacts (via N-terminus) with serine protease NS3. As to quaternary structure, forms a heterodimer with serine protease NS3. May form homooligomers. In terms of assembly, forms a heterodimer with NS2B. Interacts with non-structural protein 2A (via N-terminus). Interacts with NS4B. Interacts with unphosphorylated RNA-directed RNA polymerase NS5; this interaction stimulates RNA-directed RNA polymerase NS5 guanylyltransferase activity. NS3 interacts with host PDCD6IP; this interaction contributes to virion release. Interacts with serine protease NS3. As to quaternary structure, homodimer. Interacts with host STAT2; this interaction prevents the establishment of cellular antiviral state. Interacts with serine protease NS3. Interacts with host TRIM23; this interaction leads to NS5 ubiquitination. Post-translationally, specific enzymatic cleavages in vivo yield mature proteins. The nascent capsid protein C contains a C-terminal hydrophobic domain that act as a signal sequence for translocation of prM into the lumen of the ER. Mature capsid protein C is cleaved at a site upstream of this hydrophobic domain by NS3. prM is cleaved in post-Golgi vesicles by a host furin, releasing the mature small envelope protein M, and peptide pr. Non-structural protein 2A-alpha, a C-terminally truncated form of non-structural protein 2A, results from partial cleavage by NS3. Specific enzymatic cleavages in vivo yield mature proteins peptide 2K acts as a signal sequence and is removed from the N-terminus of NS4B by the host signal peptidase in the ER lumen. Signal cleavage at the 2K-4B site requires a prior NS3 protease-mediated cleavage at the 4A-2K site. Cleaved in post-Golgi vesicles by a host furin, releasing the mature small envelope protein M, and peptide pr. This cleavage is incomplete as up to 30% of viral particles still carry uncleaved prM. In terms of processing, N-glycosylated. Post-translationally, N-glycosylated. The excreted form is glycosylated and this is required for efficient secretion of the protein from infected cells. Polyubiquitinated; ubiquitination is probably mediated by host TRIM23 and is prerequisite for NS5-STAT2 interaction. NS5 is not ISGylated or sumoylated. In terms of processing, acetylated by host KAT5. Acetylation modulates NS3 RNA-binding and unwinding activities and plays an important positive role for viral replication. Post-translationally, phosphorylated on serines residues. This phosphorylation may trigger NS5 nuclear localization.

It localises to the virion. The protein localises to the host nucleus. Its subcellular location is the host cytoplasm. The protein resides in the host perinuclear region. It is found in the secreted. It localises to the virion membrane. The protein localises to the host endoplasmic reticulum membrane. It catalyses the reaction Selective hydrolysis of -Xaa-Xaa-|-Yaa- bonds in which each of the Xaa can be either Arg or Lys and Yaa can be either Ser or Ala.. The catalysed reaction is RNA(n) + a ribonucleoside 5'-triphosphate = RNA(n+1) + diphosphate. The enzyme catalyses a ribonucleoside 5'-triphosphate + H2O = a ribonucleoside 5'-diphosphate + phosphate + H(+). It carries out the reaction ATP + H2O = ADP + phosphate + H(+). It catalyses the reaction a 5'-end (5'-triphosphoguanosine)-ribonucleoside in mRNA + S-adenosyl-L-methionine = a 5'-end (N(7)-methyl 5'-triphosphoguanosine)-ribonucleoside in mRNA + S-adenosyl-L-homocysteine. The catalysed reaction is a 5'-end (N(7)-methyl 5'-triphosphoguanosine)-ribonucleoside in mRNA + S-adenosyl-L-methionine = a 5'-end (N(7)-methyl 5'-triphosphoguanosine)-(2'-O-methyl-ribonucleoside) in mRNA + S-adenosyl-L-homocysteine + H(+). Plays a role in virus budding by binding to the cell membrane and gathering the viral RNA into a nucleocapsid that forms the core of a mature virus particle. During virus entry, may induce genome penetration into the host cytoplasm after hemifusion induced by the surface proteins. Can migrate to the cell nucleus where it modulates host functions. In terms of biological role, inhibits RNA silencing by interfering with host Dicer. Its function is as follows. Prevents premature fusion activity of envelope proteins in trans-Golgi by binding to envelope protein E at pH6.0. After virion release in extracellular space, gets dissociated from E dimers. Functionally, acts as a chaperone for envelope protein E during intracellular virion assembly by masking and inactivating envelope protein E fusion peptide. prM is the only viral peptide matured by host furin in the trans-Golgi network probably to avoid catastrophic activation of the viral fusion activity in acidic Golgi compartment prior to virion release. prM-E cleavage is inefficient, and many virions are only partially matured. These uncleaved prM would play a role in immune evasion. May play a role in virus budding. Exerts cytotoxic effects by activating a mitochondrial apoptotic pathway through M ectodomain. May display a viroporin activity. In terms of biological role, binds to host cell surface receptor and mediates fusion between viral and cellular membranes. Envelope protein is synthesized in the endoplasmic reticulum in the form of heterodimer with protein prM. They play a role in virion budding in the ER, and the newly formed immature particle is covered with 60 spikes composed of heterodimer between precursor prM and envelope protein E. The virion is transported to the Golgi apparatus where the low pH causes dissociation of PrM-E heterodimers and formation of E homodimers. prM-E cleavage is inefficient, and many virions are only partially matured. These uncleaved prM would play a role in immune evasion. Its function is as follows. Involved in immune evasion, pathogenesis and viral replication. Once cleaved off the polyprotein, is targeted to three destinations: the viral replication cycle, the plasma membrane and the extracellular compartment. Essential for viral replication. Required for formation of the replication complex and recruitment of other non-structural proteins to the ER-derived membrane structures. Excreted as a hexameric lipoparticle that plays a role against host immune response. Antagonizing the complement function. Binds to the host macrophages and dendritic cells. Inhibits signal transduction originating from Toll-like receptor 3 (TLR3). Functionally, component of the viral RNA replication complex that functions in virion assembly and antagonizes the host immune response. Required cofactor for the serine protease function of NS3. May have membrane-destabilizing activity and form viroporins. In terms of biological role, displays three enzymatic activities: serine protease, NTPase and RNA helicase. NS3 serine protease, in association with NS2B, performs its autocleavage and cleaves the polyprotein at dibasic sites in the cytoplasm: C-prM, NS2A-NS2B, NS2B-NS3, NS3-NS4A, NS4A-2K and NS4B-NS5. NS3 RNA helicase binds RNA and unwinds dsRNA in the 3' to 5' direction. Also plays a role in virus assembly. Its function is as follows. Regulates the ATPase activity of the NS3 helicase activity. NS4A allows NS3 helicase to conserve energy during unwinding. Functionally, functions as a signal peptide for NS4B and is required for the interferon antagonism activity of the latter. Induces the formation of ER-derived membrane vesicles where the viral replication takes place. Inhibits interferon (IFN)-induced host STAT1 phosphorylation and nuclear translocation, thereby preventing the establishment of cellular antiviral state by blocking the IFN-alpha/beta pathway. In terms of biological role, replicates the viral (+) and (-) RNA genome, and performs the capping of genomes in the cytoplasm. NS5 methylates viral RNA cap at guanine N-7 and ribose 2'-O positions. Besides its role in RNA genome replication, also prevents the establishment of cellular antiviral state by blocking the interferon-alpha/beta (IFN-alpha/beta) signaling pathway. IFN-I induces binding of NS5 to host IFN-activated transcription factor STAT2, preventing its transcriptional activity. Host TRIM23 is the E3 ligase that interacts with and polyubiquitinates NS5 to promote its binding to STAT2 and trigger IFN-I signaling inhibition. The sequence is that of Genome polyprotein from Yellow fever virus (isolate Uganda/A7094A4/1948) (YFV).